A 1155-amino-acid polypeptide reads, in one-letter code: MNSNELDLRNKYFYEIFGKKRKSDTSTPTQLFSGSKVQTNINEISITNDEDEDSTEDENKASLKDYTLGHDTGARYRIAPDCSSHQLKASPVLHISTNLNSSPQSFTGDQISPTNKKISINDSTRQDKGNSCTTTSSPSQKRSNVLLPHVRKHSSPSLLSFSKNSGSHMGDPNQLSTPPTPKSAGHTMELHSSFNGKHSSSSTSSLFALESLKTQNRRSSNSSNHSSQYRRHTNQHQRHHSRSKSSPVSLTEISMIKGTPLVYPALLSLIAIKFKQTIKLSTHKKMGLLYRDSFTGKQAIDTLCLIIGSLDRNLGMLIGKSLEAQKLFHDVLYDHGVRDSVLEIYELSSESIFMAHQSQSSTSIANTFSSSSSSVNSLRTKTEIYGVFVPLTHCYSSTCSLEKLCYSISCPNRLQQQANLHLKLGGGLKRNISLALDKEDDERISWTNSVPKSVWESLSKQQIKRQEAIYELFTTEKKFVKSLEIIRDTFMKKLLETNIIPSDVRINFVKHVFAHINEIYSVNREFLKALAQRQSLSPICPGIADIFLQYLPFFDPFLSYIASRPYAKYLIETQRSVNPNFARFDDEVSNSSLRHGIDSFLSQGVSRPGRYSLLVREIIHFSDPVTDKDDLQMLMKVQDLLKDLMKRIDRASGAAQDRYDVKVLKQKILFKNEYVNLGLNNEKRKIKHEGLLSRKDVNKTDASFSGDIQFYLLDNMLLFLKSKAVNKWHQHTVFQRPIPLPLLFICPAEDMPPIKRYVTENPNCSAGVLLPQYQTSNPKNAIVFAYYGTKQQYQVTLYAPQPAGLQTLIEKVKQEQKRLLDETKHITFKQMVGQFFHSYINTNRVNDVLICHAGKILLVATNMGLFVLNYATSINQKPVHLLHKISISQISVLEEYKVMILLIDKKLYGCPLDVIDDAENADFLFRKNSKVLFKYVAMFKDGFCNGKRIIMIAHHFLHAVQLLIVNPLIFDFNSGNFKKNLKAGLVDFSVDSEPLSFSFLENKICIGCKKNIKILNVPEVCDKNGFKMRELLNLHDNKVLANMYKETFKVVSMFPIKNSTFACFPELCFFLNKQGKREETKGCFHWEGEPEQFACSYPYIVAINSNFIEIRHIENGELVRCVLGNKIRMLKSYAKKILYCYEDPQGFEIIELLNF.

Met1 is modified (N-acetylmethionine). A compositionally biased stretch (polar residues) spans 100–143; sequence NSSPQSFTGDQISPTNKKISINDSTRQDKGNSCTTTSSPSQKRS. The tract at residues 100–249 is disordered; it reads NSSPQSFTGD…HSRSKSSPVS (150 aa). Residues Ser154 and Ser155 each carry the phosphoserine modification. Low complexity predominate over residues 155-167; that stretch reads SPSLLSFSKNSGS. The residue at position 180 (Thr180) is a Phosphothreonine. A compositionally biased stretch (low complexity) spans 190-227; that stretch reads LHSSFNGKHSSSSTSSLFALESLKTQNRRSSNSSNHSS. Residues 228–243 are compositionally biased toward basic residues; sequence QYRRHTNQHQRHHSRS. Ser433 carries the post-translational modification Phosphoserine. A DH domain is found at 464-651; that stretch reads KRQEAIYELF…KDLMKRIDRA (188 aa). In terms of domain architecture, CNH spans 842–1137; that stretch reads TNRVNDVLIC…RMLKSYAKKI (296 aa).

Functionally, stimulates the exchange of RHO1 GDP-bound form into GTP-bound form. This is RHO1 GDP-GTP exchange protein 1 (ROM1) from Saccharomyces cerevisiae (strain ATCC 204508 / S288c) (Baker's yeast).